The primary structure comprises 65 residues: MRCVPVFVILLLLIASAPSVDARLKTKDDMPLPSSHANIKRTLQMLRNKRCCPGWELCCEWDDGW.

A signal peptide spans 1-19 (MRCVPVFVILLLLIASAPS). The propeptide occupies 20–48 (VDARLKTKDDMPLPSSHANIKRTLQMLRN). A 4-carboxyglutamate modification is found at Glu-60.

This sequence belongs to the conotoxin T superfamily. Post-translationally, contains 2 disulfide bonds that can be either 'C1-C3, C2-C4' or 'C1-C4, C2-C3', since these disulfide connectivities have been observed for conotoxins with cysteine framework V (for examples, see AC P0DQQ7 and AC P81755). As to expression, expressed by the venom duct.

It is found in the secreted. The protein is Conotoxin mr5.1b of Conus marmoreus (Marble cone).